Here is a 296-residue protein sequence, read N- to C-terminus: tRNA dimethylallyltransferase (296 aa).

2–9 contributes to the ATP binding site; that stretch reads GPTASGKT. Position 4–9 (4–9) interacts with substrate; that stretch reads TASGKT. Interaction with substrate tRNA stretches follow at residues 27–30, 151–155, and 232–237; these read DSAL, QRLSR, and RCVGYR.

It belongs to the IPP transferase family. In terms of assembly, monomer. It depends on Mg(2+) as a cofactor.

The enzyme catalyses adenosine(37) in tRNA + dimethylallyl diphosphate = N(6)-dimethylallyladenosine(37) in tRNA + diphosphate. Functionally, catalyzes the transfer of a dimethylallyl group onto the adenine at position 37 in tRNAs that read codons beginning with uridine, leading to the formation of N6-(dimethylallyl)adenosine (i(6)A). The chain is tRNA dimethylallyltransferase from Shewanella sp. (strain MR-4).